The following is an 815-amino-acid chain: Chromatin assembly factor 1 subunit FAS1 (815 aa).

5 disordered regions span residues 1-39 (MDEVSTVNENENRKTMIEPKKLNKRKREPTAIENLTSEE), 292-330 (NNKEKEETESRKRIKKQQDESEKEQKRREKEQAELKKQL), 434-477 (KLST…KKSR), 502-577 (QVVK…EGVQ), and 791-815 (RCLPPSTKPQPAVEDAAERLENENA). 2 stretches are compositionally biased toward basic and acidic residues: residues 10–21 (NENRKTMIEPKK) and 292–328 (NNKEKEETESRKRIKKQQDESEKEQKRREKEQAELKK). Residues 244-336 (EEKLLLKQLE…KKQLQVQKQA (93 aa)) are a coiled coil. 2 stretches are compositionally biased toward acidic residues: residues 516–532 (LDYEVDSDEEWEEEEAG) and 554–576 (DDEDDSEDDFMVPDGYLSEDEGV). Basic and acidic residues predominate over residues 806 to 815 (AAERLENENA).

This sequence belongs to the CHAF1A family. In terms of assembly, component of the chromatin assembly factor 1 (CAF-1) complex, composed of FAS1, FAS2 and MSI1. Interacts with CYP71. Expressed in the shoot apical meristem, young leaf primordia, root tip and first lateral root primordium at the hypocotyl/root junction.

The protein localises to the nucleus. Component of the chromatin assembly factor complex (CAF-1) involved in chromatin assembly following DNA replication and DNA repair. Assembles histone octamers onto replicating DNA in vitro. Required for several aspects of development, including seedling growth and leaf hair differentiation. Plays a critical role in the organization of shoot apical meristem (SAM) and root apical meristem (RAM) during postembryonic development by facilitating stable maintenance of gene expression states. Seems not required to maintain transcriptional repression of heterochromatic genes. Involved in heterologous recombination. May repress endocycle. This Arabidopsis thaliana (Mouse-ear cress) protein is Chromatin assembly factor 1 subunit FAS1 (FAS1).